We begin with the raw amino-acid sequence, 429 residues long: UDP-N-acetylglucosamine 1-carboxyvinyltransferase (429 aa).

22–23 (KN) serves as a coordination point for phosphoenolpyruvate. Arginine 102 serves as a coordination point for UDP-N-acetyl-alpha-D-glucosamine. The Proton donor role is filled by cysteine 126. Cysteine 126 carries the post-translational modification 2-(S-cysteinyl)pyruvic acid O-phosphothioketal. Residues 131-135 (RPVDL), aspartate 316, and isoleucine 338 contribute to the UDP-N-acetyl-alpha-D-glucosamine site.

Belongs to the EPSP synthase family. MurA subfamily.

It localises to the cytoplasm. The catalysed reaction is phosphoenolpyruvate + UDP-N-acetyl-alpha-D-glucosamine = UDP-N-acetyl-3-O-(1-carboxyvinyl)-alpha-D-glucosamine + phosphate. It participates in cell wall biogenesis; peptidoglycan biosynthesis. Cell wall formation. Adds enolpyruvyl to UDP-N-acetylglucosamine. This chain is UDP-N-acetylglucosamine 1-carboxyvinyltransferase, found in Afipia carboxidovorans (strain ATCC 49405 / DSM 1227 / KCTC 32145 / OM5) (Oligotropha carboxidovorans).